The chain runs to 170 residues: Photosystem II extrinsic protein V (170 aa).

The N-terminal stretch at 1–33 is a signal peptide; that stretch reads MASLFASLGRSLIKLLIVLPVIIGLSISSPAMA. Residues Cys70, Cys73, His74, and His125 each contribute to the heme c site.

This sequence belongs to the cytochrome c family. PsbV subfamily. PSII is composed of 1 copy each of membrane proteins PsbA, PsbB, PsbC, PsbD, PsbE, PsbF, PsbH, PsbI, PsbJ, PsbK, PsbL, PsbM, PsbT, PsbX, PsbY, Psb30/Ycf12, peripheral proteins PsbO, CyanoQ (PsbQ), PsbU, PsbV and a large number of cofactors. It forms dimeric complexes. It depends on heme c as a cofactor.

Its subcellular location is the cellular thylakoid membrane. Its function is as follows. One of the extrinsic, lumenal subunits of photosystem II (PSII). PSII is a light-driven water plastoquinone oxidoreductase, using light energy to abstract electrons from H(2)O, generating a proton gradient subsequently used for ATP formation. The extrinsic proteins stabilize the structure of photosystem II oxygen-evolving complex (OEC), the ion environment of oxygen evolution and protect the OEC against heat-induced inactivation. Low-potential cytochrome c that plays a role in the OEC of PSII. The chain is Photosystem II extrinsic protein V from Prochlorococcus marinus (strain MIT 9303).